Consider the following 141-residue polypeptide: Probable trafficking protein particle complex subunit 2 (141 aa).

This sequence belongs to the TRAPP small subunits family. Sedlin subfamily. As to quaternary structure, part of the multisubunit TRAPP (transport protein particle) complex.

It is found in the cytoplasm. Its subcellular location is the perinuclear region. The protein resides in the endoplasmic reticulum. The protein localises to the golgi apparatus. Its function is as follows. May play a role in vesicular transport from endoplasmic reticulum to Golgi. Required for the systemic spread of the RNAi response. This Caenorhabditis elegans protein is Probable trafficking protein particle complex subunit 2 (sedl-1).